A 109-amino-acid chain; its full sequence is Nucleoid-associated protein ASA_2087 (109 aa).

Disordered regions lie at residues 1-23 (MFGK…RMQK) and 87-109 (QSKS…KLPF). Residues 11–23 (MKQAQQMQERMQK) are compositionally biased toward low complexity.

It belongs to the YbaB/EbfC family. Homodimer.

The protein localises to the cytoplasm. It localises to the nucleoid. Its function is as follows. Binds to DNA and alters its conformation. May be involved in regulation of gene expression, nucleoid organization and DNA protection. The protein is Nucleoid-associated protein ASA_2087 of Aeromonas salmonicida (strain A449).